Consider the following 236-residue polypeptide: NAP1-binding protein 2 (236 aa).

Position 102 is a phosphoserine (S102). Residues I110–P171 enclose the SH3 domain. Residues S196 and S235 each carry the phosphoserine modification.

As to quaternary structure, interacts with PBS2 and PTC1.

It localises to the cytoplasm. Functionally, negatively regulates the high-osmolarity glycerol (HOG) pathway through its negative regulation of the HOG1 kinase activity. Mediates the binding between the PTC1 phosphatase and the PBS2 MAP/ERK kinase (MEK). With PTC1, regulates endoplasmic reticulum inheritance through the cell wall integrity (CWI) MAPK pathway by modulating the MAPK, SLT2. The chain is NAP1-binding protein 2 (NBP2) from Saccharomyces cerevisiae (strain ATCC 204508 / S288c) (Baker's yeast).